Reading from the N-terminus, the 501-residue chain is Sucrose transport protein SUT2 (501 aa).

The Cytoplasmic segment spans residues 1–31 (MPRRPSGGGGGAGPAAAAVRKVPLRKLLRAA). The helical transmembrane segment at 32 to 52 (SVACGVQFGWALQLSLLTPYV) threads the bilayer. The Extracellular segment spans residues 53-55 (QEL). Residues 56–76 (GIPHAFASLVWLCGPLSGLLV) form a helical membrane-spanning segment. Over 77-98 (QPLVGHLSDRIAPAASPLGRRR) the chain is Cytoplasmic. The chain crosses the membrane as a helical span at residues 99 to 119 (PFIAAGAASIAAAVLTVGFSA). Residues 120–135 (DLGRIFGDSITPGSTR) are Extracellular-facing. The chain crosses the membrane as a helical span at residues 136–156 (LGAIIVYLVGFWLLDVGNNAT). The Cytoplasmic portion of the chain corresponds to 157–176 (QGPCRAFLADLTENDPRRTR). Residues 177–197 (IANAYFSLFMALGNILGYATG) form a helical membrane-spanning segment. The Extracellular segment spans residues 198-222 (AYSGWYKIFPFTVTPSCSISCANLK). A helical transmembrane segment spans residues 223-243 (SAFLLDIIILVVTTCITVASV). Residues 244–278 (QEPQSLGSDEADHPSTEQEAFLWELFGSFRYFTLP) lie on the Cytoplasmic side of the membrane. A helical transmembrane segment spans residues 279–299 (VWMVLIVTALTWIGWFPFILF). Residues 300 to 327 (DTDWMGREIYRGSPDDPSITQSYHDGVR) lie on the Extracellular side of the membrane. Residues 328–348 (MGSFGLMLNSVLLGFTSIVLE) form a helical membrane-spanning segment. At 349-356 (KLCRKWGA) the chain is on the cytoplasmic side. Residues 357–377 (GLVWGVSNILMALCFVAMLVI) form a helical membrane-spanning segment. The Extracellular segment spans residues 378-394 (TYVAKNMDYPPSGVPPT). Residues 395 to 415 (GIVIASLVVFTILGAPLAITY) form a helical membrane-spanning segment. At 416-433 (SIPYAMAASRVENLGLGQ) the chain is on the cytoplasmic side. Residues 434-454 (GLAMGILNLAIVIPQVIVSLG) form a helical membrane-spanning segment. The Extracellular segment spans residues 455–467 (SGPWDQLFGGGNA). The chain crosses the membrane as a helical span at residues 468-488 (PAFAVAAAASFIGGLVAILGL). At 489–501 (PRARIASRRRGHR) the chain is on the cytoplasmic side.

It belongs to the glycoside-pentoside-hexuronide (GPH) cation symporter transporter (TC 2.A.2.4) family. In terms of assembly, homodimer. In terms of tissue distribution, expressed in source leaf blades.

The protein resides in the cell membrane. The protein operates within glycan biosynthesis; sucrose metabolism. Its function is as follows. Responsible for the transport of sucrose into the cell, with the concomitant uptake of protons (symport system). May also transport other glucosides. This is Sucrose transport protein SUT2 (SUT2) from Oryza sativa subsp. indica (Rice).